A 24-amino-acid chain; its full sequence is U1-plectoxin-Pt1e (24 aa).

Cysteines 4 and 18 form a disulfide.

This sequence belongs to the neurotoxin 02 (plectoxin) family. 02 (plectoxin) subfamily. In terms of processing, contains 5 disulfide bonds. As to expression, expressed by the venom gland.

It is found in the secreted. Functionally, potent toxin that may paralyze and/or kill insect pests such as H.virescens (lepidoptera), S.exigua (beet armyworm) and M.sexta (tobacco hornworm). This Plectreurys tristis (Spider) protein is U1-plectoxin-Pt1e.